The chain runs to 324 residues: MEGQPIHKPVLLREVIELLGIRPGMKILDATVGLGGHSRGMLEAAGGEGQVLGLDRDREALSEAGRWLAPYGDRVRLVRTRSSRFPAVLAEAGWEKVDAALLDAGMSSLQLDDPERGFGFLHDGPLDMRMGAEDGGETAEGLVNLASYARLCEIIREYGEDPQAGRIARAIVSVREKEAITTTARLAEVVWQAYPAKWRATARQHPATRTFQALRMAVNEELAELEAFLKAIPDHLAPGGRVAVISFHSLEDRLVKRAFRAEATDCICPREQVVCVCGHRARLRILTKKPVMAGEEEVRDNSRARSAKLRVAERLPDAGADVAG.

Residues 35–37, aspartate 55, phenylalanine 85, aspartate 103, and glutamine 110 each bind S-adenosyl-L-methionine; that span reads GGH.

It belongs to the methyltransferase superfamily. RsmH family.

Its subcellular location is the cytoplasm. The enzyme catalyses cytidine(1402) in 16S rRNA + S-adenosyl-L-methionine = N(4)-methylcytidine(1402) in 16S rRNA + S-adenosyl-L-homocysteine + H(+). Its function is as follows. Specifically methylates the N4 position of cytidine in position 1402 (C1402) of 16S rRNA. This chain is Ribosomal RNA small subunit methyltransferase H, found in Solidesulfovibrio magneticus (strain ATCC 700980 / DSM 13731 / RS-1) (Desulfovibrio magneticus).